The primary structure comprises 87 residues: Down syndrome critical region protein 10 (87 aa).

This is Down syndrome critical region protein 10 (DSCR10) from Pan troglodytes (Chimpanzee).